We begin with the raw amino-acid sequence, 755 residues long: Xaa-Pro dipeptidyl-peptidase (755 aa).

Active-site charge relay system residues include serine 348, aspartate 468, and histidine 498.

The protein belongs to the peptidase S15 family. Homodimer.

The protein resides in the cytoplasm. The enzyme catalyses Hydrolyzes Xaa-Pro-|- bonds to release unblocked, N-terminal dipeptides from substrates including Ala-Pro-|-p-nitroanilide and (sequentially) Tyr-Pro-|-Phe-Pro-|-Gly-Pro-|-Ile.. Removes N-terminal dipeptides sequentially from polypeptides having unsubstituted N-termini provided that the penultimate residue is proline. The chain is Xaa-Pro dipeptidyl-peptidase from Streptococcus thermophilus (strain ATCC BAA-250 / LMG 18311).